Consider the following 271-residue polypeptide: tRNA (guanine-N(7)-)-methyltransferase (271 aa).

The interval 1–52 (MSDSHHTPEAASASLRHVRAKGEPRFPDGPKADPAGSHFERRIRSFQPRRSR) is disordered. The span at 20–31 (AKGEPRFPDGPK) shows a compositional bias: basic and acidic residues. Residues Glu-93, Asp-118, Asp-145, and Asp-168 each coordinate S-adenosyl-L-methionine. Asp-168 is an active-site residue. Substrate is bound by residues Lys-172, Asp-204, and 241–244 (TRFE).

Belongs to the class I-like SAM-binding methyltransferase superfamily. TrmB family.

It catalyses the reaction guanosine(46) in tRNA + S-adenosyl-L-methionine = N(7)-methylguanosine(46) in tRNA + S-adenosyl-L-homocysteine. The protein operates within tRNA modification; N(7)-methylguanine-tRNA biosynthesis. Its function is as follows. Catalyzes the formation of N(7)-methylguanine at position 46 (m7G46) in tRNA. This chain is tRNA (guanine-N(7)-)-methyltransferase, found in Streptomyces coelicolor (strain ATCC BAA-471 / A3(2) / M145).